Here is a 177-residue protein sequence, read N- to C-terminus: Large ribosomal subunit protein uL6 (177 aa).

The protein belongs to the universal ribosomal protein uL6 family. Part of the 50S ribosomal subunit.

Functionally, this protein binds to the 23S rRNA, and is important in its secondary structure. It is located near the subunit interface in the base of the L7/L12 stalk, and near the tRNA binding site of the peptidyltransferase center. The protein is Large ribosomal subunit protein uL6 of Methylorubrum extorquens (strain CM4 / NCIMB 13688) (Methylobacterium extorquens).